A 616-amino-acid chain; its full sequence is Dihydroxy-acid dehydratase (616 aa).

D81 serves as a coordination point for Mg(2+). [2Fe-2S] cluster is bound at residue C122. The Mg(2+) site is built by D123 and K124. K124 carries the post-translational modification N6-carboxylysine. Residue C195 participates in [2Fe-2S] cluster binding. E491 serves as a coordination point for Mg(2+). The Proton acceptor role is filled by S517.

This sequence belongs to the IlvD/Edd family. Homodimer. The cofactor is [2Fe-2S] cluster. Mg(2+) is required as a cofactor.

It catalyses the reaction (2R)-2,3-dihydroxy-3-methylbutanoate = 3-methyl-2-oxobutanoate + H2O. The enzyme catalyses (2R,3R)-2,3-dihydroxy-3-methylpentanoate = (S)-3-methyl-2-oxopentanoate + H2O. It participates in amino-acid biosynthesis; L-isoleucine biosynthesis; L-isoleucine from 2-oxobutanoate: step 3/4. It functions in the pathway amino-acid biosynthesis; L-valine biosynthesis; L-valine from pyruvate: step 3/4. In terms of biological role, functions in the biosynthesis of branched-chain amino acids. Catalyzes the dehydration of (2R,3R)-2,3-dihydroxy-3-methylpentanoate (2,3-dihydroxy-3-methylvalerate) into 2-oxo-3-methylpentanoate (2-oxo-3-methylvalerate) and of (2R)-2,3-dihydroxy-3-methylbutanoate (2,3-dihydroxyisovalerate) into 2-oxo-3-methylbutanoate (2-oxoisovalerate), the penultimate precursor to L-isoleucine and L-valine, respectively. This chain is Dihydroxy-acid dehydratase, found in Yersinia pseudotuberculosis serotype I (strain IP32953).